The following is a 202-amino-acid chain: NADH-quinone oxidoreductase subunit C (202 aa).

It belongs to the complex I 30 kDa subunit family. In terms of assembly, NDH-1 is composed of 14 different subunits. Subunits NuoB, C, D, E, F, and G constitute the peripheral sector of the complex.

It localises to the cell inner membrane. It catalyses the reaction a quinone + NADH + 5 H(+)(in) = a quinol + NAD(+) + 4 H(+)(out). In terms of biological role, NDH-1 shuttles electrons from NADH, via FMN and iron-sulfur (Fe-S) centers, to quinones in the respiratory chain. The immediate electron acceptor for the enzyme in this species is believed to be ubiquinone. Couples the redox reaction to proton translocation (for every two electrons transferred, four hydrogen ions are translocated across the cytoplasmic membrane), and thus conserves the redox energy in a proton gradient. The chain is NADH-quinone oxidoreductase subunit C from Bartonella henselae (strain ATCC 49882 / DSM 28221 / CCUG 30454 / Houston 1) (Rochalimaea henselae).